Reading from the N-terminus, the 315-residue chain is Lipoyl synthase (315 aa).

C63, C68, C74, C89, C93, C96, and S303 together coordinate [4Fe-4S] cluster. The Radical SAM core domain maps to 75–292 (FSHGTATFMI…EKKAYDMGFR (218 aa)).

The protein belongs to the radical SAM superfamily. Lipoyl synthase family. Requires [4Fe-4S] cluster as cofactor.

It is found in the cytoplasm. It catalyses the reaction [[Fe-S] cluster scaffold protein carrying a second [4Fe-4S](2+) cluster] + N(6)-octanoyl-L-lysyl-[protein] + 2 oxidized [2Fe-2S]-[ferredoxin] + 2 S-adenosyl-L-methionine + 4 H(+) = [[Fe-S] cluster scaffold protein] + N(6)-[(R)-dihydrolipoyl]-L-lysyl-[protein] + 4 Fe(3+) + 2 hydrogen sulfide + 2 5'-deoxyadenosine + 2 L-methionine + 2 reduced [2Fe-2S]-[ferredoxin]. Its pathway is protein modification; protein lipoylation via endogenous pathway; protein N(6)-(lipoyl)lysine from octanoyl-[acyl-carrier-protein]: step 2/2. Its function is as follows. Catalyzes the radical-mediated insertion of two sulfur atoms into the C-6 and C-8 positions of the octanoyl moiety bound to the lipoyl domains of lipoate-dependent enzymes, thereby converting the octanoylated domains into lipoylated derivatives. The chain is Lipoyl synthase from Laribacter hongkongensis (strain HLHK9).